The primary structure comprises 400 residues: ASTRA-associated protein 1 (400 aa).

WD repeat units follow at residues 6–54, 57–94, 240–272, and 273–312; these read SAPQ…PKLQ, AHKD…FEMP, EYQN…KVVI, and HSDP…KGEI.

It belongs to the WD repeat ASA1 family. As to quaternary structure, component of the ASTRA chromatin remodeling machinery complex.

It localises to the nucleus. In terms of biological role, component of the ASTRA complex involved in chromatin remodeling. The polypeptide is ASTRA-associated protein 1 (ASA1) (Lodderomyces elongisporus (strain ATCC 11503 / CBS 2605 / JCM 1781 / NBRC 1676 / NRRL YB-4239) (Yeast)).